Here is a 311-residue protein sequence, read N- to C-terminus: Tricarboxylate transport protein, mitochondrial (311 aa).

A propeptide spans 1 to 13 (MAAPRGPRALSAA) (removed in mature form). The interval 1-21 (MAAPRGPRALSAAAPGSGKPK) is disordered. Solcar repeat units lie at residues 23–111 (THPG…LSNH), 122–208 (RRGL…LRNW), and 218–303 (MNPL…VVKL). 3 consecutive transmembrane segments (helical) span residues 29–46 (ILAGGLAGGIEICITFPT), 86–105 (GLSSLLYGSIPKAAVRFGMF), and 129–143 (LGAGVAEAVVVVCPM). Ser-156 bears the Phosphoserine mark. Helical transmembrane passes span 183 to 202 (GLTATVLKQGSNQAIRFFVM), 224 to 241 (GVFGATAGAASVFGNTPL), and 278 to 297 (GTVPRLGRVCLDVAIVFIIY).

It belongs to the mitochondrial carrier (TC 2.A.29) family. Possesses a short cleavable presequence, which, however, is found to be dispensable both for targeting to mitochondria and insertion into the inner membrane. However, the presequence is required to keep SLC25A1 in a soluble state and thus in an import-competent state. Mature SLC25A1 lacking the presequence is prone to aggregation. As to expression, expressed minimally but ubiquitously throughout the adult brain. Detected at higher levels in the olfactory bulb, neocortex and cerebellum. Also expressed in a subset of large cells in the globus pallidus.

The protein localises to the mitochondrion inner membrane. It localises to the mitochondrion membrane. The catalysed reaction is (S)-malate(in) + citrate(out) = (S)-malate(out) + citrate(in). The enzyme catalyses D-threo-isocitrate(in) + citrate(out) = D-threo-isocitrate(out) + citrate(in). It carries out the reaction citrate(out) + succinate(in) = citrate(in) + succinate(out). It catalyses the reaction cis-aconitate(in) + citrate(out) = cis-aconitate(out) + citrate(in). The catalysed reaction is trans-aconitate(in) + citrate(out) = trans-aconitate(out) + citrate(in). The enzyme catalyses phosphoenolpyruvate(in) + citrate(out) = phosphoenolpyruvate(out) + citrate(in). It carries out the reaction maleate(in) + citrate(out) = maleate(out) + citrate(in). In terms of biological role, mitochondrial electroneutral antiporter that exports citrate from the mitochondria into the cytosol in exchange for malate. Also able to mediate the exchange of citrate for isocitrate, phosphoenolpyruvate, cis-aconitate and to a lesser extent trans-aconitate, maleate and succinate. In the cytoplasm, citrate plays important roles in fatty acid and sterol synthesis, regulation of glycolysis, protein acetylation, and other physiopathological processes. The chain is Tricarboxylate transport protein, mitochondrial from Mus musculus (Mouse).